Consider the following 271-residue polypeptide: Probable septum site-determining protein MinC (271 aa).

The interval 106 to 125 (RRAPSPKAADDAPAQPEEPR) is disordered. The segment covering 110 to 119 (SPKAADDAPA) has biased composition (low complexity).

Belongs to the MinC family. As to quaternary structure, interacts with MinD and FtsZ.

Its function is as follows. Cell division inhibitor that blocks the formation of polar Z ring septums. Rapidly oscillates between the poles of the cell to destabilize FtsZ filaments that have formed before they mature into polar Z rings. Prevents FtsZ polymerization. This chain is Probable septum site-determining protein MinC, found in Burkholderia thailandensis (strain ATCC 700388 / DSM 13276 / CCUG 48851 / CIP 106301 / E264).